A 172-amino-acid polypeptide reads, in one-letter code: NAD(P)H-quinone oxidoreductase subunit I, chloroplastic (172 aa).

4Fe-4S ferredoxin-type domains follow at residues 55–84 (GRIH…VDWK) and 95–124 (LNYS…MTEE). [4Fe-4S] cluster-binding residues include Cys-64, Cys-67, Cys-70, Cys-74, Cys-104, Cys-107, Cys-110, and Cys-114.

The protein belongs to the complex I 23 kDa subunit family. As to quaternary structure, NDH is composed of at least 16 different subunits, 5 of which are encoded in the nucleus. [4Fe-4S] cluster is required as a cofactor.

The protein resides in the plastid. It localises to the chloroplast thylakoid membrane. It catalyses the reaction a plastoquinone + NADH + (n+1) H(+)(in) = a plastoquinol + NAD(+) + n H(+)(out). The enzyme catalyses a plastoquinone + NADPH + (n+1) H(+)(in) = a plastoquinol + NADP(+) + n H(+)(out). NDH shuttles electrons from NAD(P)H:plastoquinone, via FMN and iron-sulfur (Fe-S) centers, to quinones in the photosynthetic chain and possibly in a chloroplast respiratory chain. The immediate electron acceptor for the enzyme in this species is believed to be plastoquinone. Couples the redox reaction to proton translocation, and thus conserves the redox energy in a proton gradient. In Olimarabidopsis pumila (Dwarf rocket), this protein is NAD(P)H-quinone oxidoreductase subunit I, chloroplastic.